Here is a 467-residue protein sequence, read N- to C-terminus: Plasma alpha-L-fucosidase (467 aa).

A signal peptide spans 1–28 (MRPQELPRLAFPLLLLLLLLLPPPPCPA). N-linked (GlcNAc...) asparagine glycosylation is found at N171 and N239. S301 carries the phosphoserine; by FAM20C modification. N377 carries an N-linked (GlcNAc...) asparagine glycan.

It belongs to the glycosyl hydrolase 29 family. Homotetramer.

The protein localises to the secreted. It carries out the reaction an alpha-L-fucoside + H2O = L-fucose + an alcohol. Functionally, alpha-L-fucosidase is responsible for hydrolyzing the alpha-1,6-linked fucose joined to the reducing-end N-acetylglucosamine of the carbohydrate moieties of glycoproteins. In Homo sapiens (Human), this protein is Plasma alpha-L-fucosidase (FUCA2).